Consider the following 173-residue polypeptide: MKNYRAIGLAFTFTALSSLSAFAASLPGGASTLQETYQDWTVSCQSQKDTTACVMRQEQSSAQTGQRVLTAELRNVAGGKVDGVLLMPFGLDLAKGASLKIDDTAGPNLTFSTCLPQGCLAPVSFDAKQVAALKSGTNINVTTTALSPSQPVAFKISLKGFGAALDRIQALTK.

An N-terminal signal peptide occupies residues 1–23; sequence MKNYRAIGLAFTFTALSSLSAFA.

It belongs to the IalB family.

The polypeptide is Invasion protein B homolog BruAb1_0366 (Brucella abortus biovar 1 (strain 9-941)).